Here is a 238-residue protein sequence, read N- to C-terminus: Uridylate kinase (238 aa).

Residue 12–15 participates in ATP binding; the sequence is KLSG. Residue G54 participates in UMP binding. G55 and R59 together coordinate ATP. Residues D74 and 135–142 contribute to the UMP site; that span reads TGNPYFTT. Positions 162, 163, 168, and 171 each coordinate ATP.

Belongs to the UMP kinase family. Homohexamer.

It is found in the cytoplasm. It carries out the reaction UMP + ATP = UDP + ADP. It functions in the pathway pyrimidine metabolism; CTP biosynthesis via de novo pathway; UDP from UMP (UMPK route): step 1/1. With respect to regulation, inhibited by UTP. Functionally, catalyzes the reversible phosphorylation of UMP to UDP. This chain is Uridylate kinase, found in Nitrobacter winogradskyi (strain ATCC 25391 / DSM 10237 / CIP 104748 / NCIMB 11846 / Nb-255).